Here is a 99-residue protein sequence, read N- to C-terminus: Integration host factor subunit alpha (99 aa).

The disordered stretch occupies residues 49–75; the sequence is FGNFDLRDKNQRPGRNPKTGEDIPITA.

Belongs to the bacterial histone-like protein family. In terms of assembly, heterodimer of an alpha and a beta chain.

Functionally, this protein is one of the two subunits of integration host factor, a specific DNA-binding protein that functions in genetic recombination as well as in transcriptional and translational control. This is Integration host factor subunit alpha from Klebsiella pneumoniae (strain 342).